The chain runs to 500 residues: 4-aminobutyrate aminotransferase, mitochondrial (500 aa).

Residues 1–28 constitute a mitochondrion transit peptide; it reads MAFLLITRRLACSSQKNLHLFIPGSRYI. Residue cysteine 163 participates in [2Fe-2S] cluster binding. Position 164-165 (164-165) interacts with pyridoxal 5'-phosphate; it reads GS. Cysteine 166 is a binding site for [2Fe-2S] cluster. Arginine 220 is a binding site for substrate. The residue at position 231 (lysine 231) is an N6-succinyllysine. Residue lysine 252 is modified to N6-acetyllysine; alternate. Lysine 252 is subject to N6-succinyllysine; alternate. N6-acetyllysine is present on residues lysine 279 and lysine 318. Residue lysine 357 is modified to N6-(pyridoxal phosphate)lysine. Threonine 381 contacts pyridoxal 5'-phosphate. Lysine 413 carries the N6-acetyllysine; alternate modification. At lysine 413 the chain carries N6-succinyllysine; alternate. Lysine 452 and lysine 470 each carry N6-acetyllysine.

This sequence belongs to the class-III pyridoxal-phosphate-dependent aminotransferase family. As to quaternary structure, homodimer; disulfide-linked. Requires pyridoxal 5'-phosphate as cofactor. [2Fe-2S] cluster is required as a cofactor.

Its subcellular location is the mitochondrion matrix. It carries out the reaction 4-aminobutanoate + 2-oxoglutarate = succinate semialdehyde + L-glutamate. The enzyme catalyses (S)-3-amino-2-methylpropanoate + 2-oxoglutarate = 2-methyl-3-oxopropanoate + L-glutamate. Catalyzes the conversion of gamma-aminobutyrate and L-beta-aminoisobutyrate to succinate semialdehyde and methylmalonate semialdehyde, respectively. Can also convert delta-aminovalerate and beta-alanine. The sequence is that of 4-aminobutyrate aminotransferase, mitochondrial from Mus musculus (Mouse).